A 326-amino-acid chain; its full sequence is Glycerol-3-phosphate dehydrogenase [NAD(P)+] (326 aa).

Residues Trp-15, Arg-35, and Lys-107 each contribute to the NADPH site. Residues Lys-107, Gly-135, and Ser-137 each contribute to the sn-glycerol 3-phosphate site. An NADPH-binding site is contributed by Ala-139. The sn-glycerol 3-phosphate site is built by Lys-190, Asp-243, Ser-253, Arg-254, and Asn-255. The active-site Proton acceptor is Lys-190. Arg-254 lines the NADPH pocket. Residues Leu-273 and Glu-275 each coordinate NADPH.

It belongs to the NAD-dependent glycerol-3-phosphate dehydrogenase family.

Its subcellular location is the cytoplasm. The catalysed reaction is sn-glycerol 3-phosphate + NAD(+) = dihydroxyacetone phosphate + NADH + H(+). It catalyses the reaction sn-glycerol 3-phosphate + NADP(+) = dihydroxyacetone phosphate + NADPH + H(+). It participates in membrane lipid metabolism; glycerophospholipid metabolism. Its function is as follows. Catalyzes the reduction of the glycolytic intermediate dihydroxyacetone phosphate (DHAP) to sn-glycerol 3-phosphate (G3P), the key precursor for phospholipid synthesis. The polypeptide is Glycerol-3-phosphate dehydrogenase [NAD(P)+] (Bradyrhizobium sp. (strain BTAi1 / ATCC BAA-1182)).